Here is a 152-residue protein sequence, read N- to C-terminus: Regulator of G-protein signaling 21 (152 aa).

The RGS domain occupies 21-137 (NMDTLLANQA…LKSEIYKKLV (117 aa)).

As to expression, expressed ubiquitously.

In terms of biological role, inhibits signal transduction by increasing the GTPase activity of G protein alpha subunits thereby driving them into their inactive GDP-bound form. This is Regulator of G-protein signaling 21 (RGS21) from Homo sapiens (Human).